Here is a 230-residue protein sequence, read N- to C-terminus: uncharacterized protein (230 aa).

Disordered regions lie at residues 63-90 (TDCQ…KKTI) and 194-230 (KKLE…YKEH). Positions 194-217 (KKLEEREQMDKHPQDRDNKDKEVN) are enriched in basic and acidic residues.

This is an uncharacterized protein from Caenorhabditis elegans.